The following is a 134-amino-acid chain: D-dopachrome decarboxylase-like protein (134 aa).

This sequence belongs to the MIF family.

It is found in the cytoplasm. Functionally, may have lyase activity. This is D-dopachrome decarboxylase-like protein (DDTL) from Homo sapiens (Human).